Reading from the N-terminus, the 368-residue chain is Leu/Ile/Val-binding protein homolog 3 (368 aa).

The N-terminal stretch at 1–23 is a signal peptide; it reads MNLKLLSSVAFAATIGFASAAYA.

The protein belongs to the leucine-binding protein family.

Functionally, component of an amino-acid transport system. This chain is Leu/Ile/Val-binding protein homolog 3, found in Brucella melitensis biotype 1 (strain ATCC 23456 / CCUG 17765 / NCTC 10094 / 16M).